The following is a 128-amino-acid chain: L-ectoine synthase (128 aa).

It belongs to the ectoine synthase family.

It catalyses the reaction (2S)-4-acetamido-2-aminobutanoate = L-ectoine + H2O. The protein operates within amine and polyamine biosynthesis; ectoine biosynthesis; L-ectoine from L-aspartate 4-semialdehyde: step 3/3. In terms of biological role, catalyzes the circularization of gamma-N-acetyl-alpha,gamma-diaminobutyric acid (ADABA) to ectoine (1,4,5,6-tetrahydro-2-methyl-4-pyrimidine carboxylic acid), which is an excellent osmoprotectant. The sequence is that of L-ectoine synthase from Virgibacillus pantothenticus.